The chain runs to 202 residues: Glycerol-3-phosphate acyltransferase (202 aa).

4 helical membrane passes run 11–31 (ALIAALVLGYACGAIPFGLIL), 87–107 (PALAAGLGAFLGHLFPVWLGF), 116–136 (FIGVLLALSPLTLAAFAAIWL), and 158–178 (VILWALGHGGVAALFLVLAAL).

Belongs to the PlsY family. Probably interacts with PlsX.

The protein resides in the cell inner membrane. The catalysed reaction is an acyl phosphate + sn-glycerol 3-phosphate = a 1-acyl-sn-glycero-3-phosphate + phosphate. It functions in the pathway lipid metabolism; phospholipid metabolism. Functionally, catalyzes the transfer of an acyl group from acyl-phosphate (acyl-PO(4)) to glycerol-3-phosphate (G3P) to form lysophosphatidic acid (LPA). This enzyme utilizes acyl-phosphate as fatty acyl donor, but not acyl-CoA or acyl-ACP. This Methylorubrum populi (strain ATCC BAA-705 / NCIMB 13946 / BJ001) (Methylobacterium populi) protein is Glycerol-3-phosphate acyltransferase.